The following is a 292-amino-acid chain: 4-hydroxy-tetrahydrodipicolinate synthase (292 aa).

Position 45 (threonine 45) interacts with pyruvate. Residue tyrosine 133 is the Proton donor/acceptor of the active site. Lysine 161 acts as the Schiff-base intermediate with substrate in catalysis. Position 203 (isoleucine 203) interacts with pyruvate.

The protein belongs to the DapA family. As to quaternary structure, homodimer.

The protein resides in the cytoplasm. It carries out the reaction L-aspartate 4-semialdehyde + pyruvate = (2S,4S)-4-hydroxy-2,3,4,5-tetrahydrodipicolinate + H2O + H(+). It participates in amino-acid biosynthesis; L-lysine biosynthesis via DAP pathway; (S)-tetrahydrodipicolinate from L-aspartate: step 3/4. Catalyzes the condensation of (S)-aspartate-beta-semialdehyde [(S)-ASA] and pyruvate to 4-hydroxy-tetrahydrodipicolinate (HTPA). The sequence is that of 4-hydroxy-tetrahydrodipicolinate synthase from Pseudomonas aeruginosa (strain ATCC 15692 / DSM 22644 / CIP 104116 / JCM 14847 / LMG 12228 / 1C / PRS 101 / PAO1).